The sequence spans 365 residues: Bifunctional chorismate mutase/prephenate dehydratase (365 aa).

One can recognise a Chorismate mutase domain in the interval 1 to 96 (MSEADQLKAL…SCLALEQPLR (96 aa)). The substrate site is built by Arg-11, Arg-28, Lys-39, and Glu-57. A Prephenate dehydratase domain is found at 97 to 272 (VAYLGPEGTF…NSTRFLIIGS (176 aa)). The region spanning 284–361 (SIIVSMRNKP…VALKVLGSYP (78 aa)) is the ACT domain.

Its subcellular location is the cytoplasm. The enzyme catalyses chorismate = prephenate. It catalyses the reaction prephenate + H(+) = 3-phenylpyruvate + CO2 + H2O. It functions in the pathway amino-acid biosynthesis; L-phenylalanine biosynthesis; phenylpyruvate from prephenate: step 1/1. The protein operates within metabolic intermediate biosynthesis; prephenate biosynthesis; prephenate from chorismate: step 1/1. Its function is as follows. Catalyzes the Claisen rearrangement of chorismate to prephenate and the decarboxylation/dehydration of prephenate to phenylpyruvate. The polypeptide is Bifunctional chorismate mutase/prephenate dehydratase (Stutzerimonas stutzeri (Pseudomonas stutzeri)).